The following is a 497-amino-acid chain: Putative zinc finger and SCAN domain-containing protein 5D (497 aa).

The region spanning 41–123 is the SCAN box domain; that stretch reads KAGRRMFSCP…DLLRNNRRPK (83 aa). Residues 148-342 form a disordered region; it reads PASVRDDPRG…GPAGAVSHPN (195 aa). The segment covering 158-167 has biased composition (polar residues); it reads VSSQRASSVN. Basic and acidic residues-rich tracts occupy residues 216 to 229 and 249 to 259; these read PTLE…REEN and KEGKEPKKRAS. 5 consecutive C2H2-type zinc fingers follow at residues 352-374, 380-402, 408-430, 436-458, and 464-486; these read FACG…MRSH, FQCN…QRIH, YTCD…KRSH, YKCK…KLIH, and YKCP…QKTH.

It localises to the nucleus. This Homo sapiens (Human) protein is Putative zinc finger and SCAN domain-containing protein 5D.